The following is a 1499-amino-acid chain: Pleiotropic ABC efflux transporter of multiple drugs CDR1 (1499 aa).

Residues 1 to 11 (MSLASDKKDAD) show a composition bias toward basic and acidic residues. A disordered region spans residues 1–29 (MSLASDKKDADVASTTTTAQDDDNLSTYH). 3 N-linked (GlcNAc...) asparagine glycosylation sites follow: asparagine 24, asparagine 96, and asparagine 99. One can recognise an ABC transporter 1 domain in the interval 146 to 399 (VYNTVVPSTA…FQKMGYVSPE (254 aa)). Position 307 is a phosphoserine (serine 307). N-linked (GlcNAc...) asparagine glycosylation occurs at asparagine 323. At serine 484 the chain carries Phosphoserine. Residues 510–530 (GVTLFMVIGNSSMAFILGSMF) form a helical membrane-spanning segment. The N-linked (GlcNAc...) asparagine glycan is linked to asparagine 537. 5 consecutive transmembrane segments (helical) span residues 548 to 568 (AMFFAVLFNAFSSLLEIFSLF), 597 to 617 (VPAKLITAVCFNIIYYFLVNF), 622 to 642 (GVFFFYFLINIVAVFAMSHLF), 654 to 674 (AAMVPASMLLLGLSMYSGFAI), and 763 to 783 (GFGIGLAYVIFFLVLYLILCE). N-linked (GlcNAc...) asparagine glycosylation occurs at asparagine 813. An ABC transporter 2 domain is found at 857–1099 (FHWRNLCYDV…TMIDYFESHG (243 aa)). Residue 893–900 (GASGAGKT) participates in ATP binding. N-linked (GlcNAc...) asparagine glycosylation occurs at asparagine 1159. 3 consecutive transmembrane segments (helical) span residues 1193 to 1213 (YLWSKFFLTIFNNIFIGFTFF), 1228 to 1248 (AVFMFTVIFNPLLQQYLPSFV), and 1278 to 1298 (IPWNILAGTVAFVIYYYAIGF). Asparagine 1301 carries an N-linked (GlcNAc...) asparagine glycan. 2 helical membrane passes run 1314 to 1334 (LFWLFSCAFYVYIGSLALFCI) and 1342 to 1362 (AAANMASLMFTLSLSFCGVLV). N-linked (GlcNAc...) asparagine glycosylation occurs at asparagine 1412. A helical transmembrane segment spans residues 1466-1486 (WGIFICYIAFNYIAGIFLYWL).

This sequence belongs to the ABC transporter superfamily. Phosphorylated at Ser-307 and Ser-484. Ser-307 and Ser-484 are dephosphorylated on glucose depletion and independently rephosphorylated during glucose exposure or under stress.

It localises to the cell membrane. Its activity is regulated as follows. Inhibited by clorgyline. Inhibited by RC21v3, a 4-methoxy-2,3,6-trimethylbenzenesulphonyl derivative of the D-octapeptide D-FFKWQRRR, via the interaction with the ectodomain. FK506, enniatin, milbemycin alpha-11, and milbemycin beta-9 also inhibit CDR1 activity. Inhibited by milbemycin A3/A4 oxim derivatives. In terms of biological role, pleiotropic ABC efflux transporter that transports and confers resistance to structurally and functionally unrelated compounds including rhodamine 6G, Nile red, caspofungin, cycloheximide, or azoles such as fluconazole, itraconazole, ketoconazole, posaconazole, voriconazole, and isavuconazole. Chlorbromuron, itraconazole, yohimbine, ketoconazole, miconazole, clotrimazole, DE-11, tamoxifen, quinidine, verapamil can compete for rhodamine 6G's binding site(s) while compounds such as propanil, chloramphenicol, benomyl, voriconazole, tritylimidazole, ketoconazole, miconazole, tamoxifen, gefitinib shared binding site(s) with fluconazole. Nile red mediated efflux appears to be relatively more specific since only five compounds such as ZW3-12, rhodamine 123, miconazole, clotrimazole, and itraconazole can inhibit its accumulation. Does not use as substrates 4-nitroquinoline 1-oxide (4-NQO) and disulfiram. Does not play a role in the azole resistance in mature biofilms. This Candida glabrata (strain ATCC 2001 / BCRC 20586 / JCM 3761 / NBRC 0622 / NRRL Y-65 / CBS 138) (Yeast) protein is Pleiotropic ABC efflux transporter of multiple drugs CDR1.